The following is a 254-amino-acid chain: Alcohol dehydrogenase (254 aa).

10–33 (FVAGLGGIGLDTSREIVKSGPKNL) provides a ligand contact to NAD(+). Position 138 (Ser-138) interacts with substrate. The active-site Proton acceptor is the Tyr-151.

The protein belongs to the short-chain dehydrogenases/reductases (SDR) family. Homodimer.

It catalyses the reaction a primary alcohol + NAD(+) = an aldehyde + NADH + H(+). It carries out the reaction a secondary alcohol + NAD(+) = a ketone + NADH + H(+). This is Alcohol dehydrogenase (Adh) from Drosophila nigra (Fruit fly).